The primary structure comprises 561 residues: Carbohydrate sulfotransferase 15 (561 aa).

Over 1-80 the chain is Cytoplasmic; sequence MRHCINCCIQ…FLRFKKGKRC (80 aa). Residues 81–101 form a helical; Signal-anchor for type II membrane protein membrane-spanning segment; that stretch reads SLVFGLIIMTLVMASYILSGA. The Lumenal segment spans residues 102-561; sequence HQELLISSPF…ADEAFAWKTT (460 aa). 263–267 lines the 3'-phosphoadenylyl sulfate pocket; that stretch reads KCGTT. N-linked (GlcNAc...) asparagine glycosylation occurs at Asn364. Residues Arg392 and Ser400 each coordinate 3'-phosphoadenylyl sulfate.

This sequence belongs to the sulfotransferase 1 family. In terms of assembly, homodimer; disulfide-linked (Potential). The relevance of homodimerization is however unsure. May interact with phosphorylated proteins in resting B-cells, including HCK. It depends on a divalent metal cation as a cofactor. The cofactor is glutathione. In terms of processing, glycosylated. Expressed in B-cell-enriched tissues but not in fetal or adult thymus. Expressed in fetal and adult spleen, lymph node, tonsil, bone marrow and peripheral leukocytes. Not expressed in T-cells. In pro-B, pre-B, and mature B-cell lines, it colocalizes with RAG1.

Its subcellular location is the golgi apparatus membrane. The catalysed reaction is dermatan 4'-sulfate + n 3'-phosphoadenylyl sulfate = dermatan 4',6'-bissulfate + n adenosine 3',5'-bisphosphate + n H(+). It catalyses the reaction chondroitin 4'-sulfate + n 3'-phosphoadenylyl sulfate = chondroitin 4',6'-bissulfate + n adenosine 3',5'-bisphosphate + n H(+). Inhibited by phenyl beta-GalNAc(4,6-SO(4)). Its function is as follows. Sulfotransferase that transfers sulfate from 3'-phosphoadenosine 5'-phosphosulfate (PAPS) to the C-6 hydroxyl group of the GalNAc 4-sulfate residue of chondroitin sulfate A and forms chondroitin sulfate E containing GlcA-GalNAc(4,6-SO(4)) repeating units. It also transfers sulfate to a unique non-reducing terminal sequence, GalNAc(4SO4)-GlcA(2SO4)-GalNAc(6SO4), to yield a highly sulfated structure similar to the structure found in thrombomodulin chondroitin sulfate. May also act as a B-cell receptor involved in BCR ligation-mediated early activation that mediate regulatory signals key to B-cell development and/or regulation of B-cell-specific RAG expression; however such results are unclear in vivo. The protein is Carbohydrate sulfotransferase 15 (CHST15) of Homo sapiens (Human).